The following is a 522-amino-acid chain: MSSDNTPSINRRNNENPPQSSLPTTSGIVYNMFPACPYPHVQNPAFHGSVDVPQVAQKAFDPQAATVSESANVSRPTPAPVPPAGNTNTPTTSNSNQNLENNVTSAASMPAILNAAGQLEFSPSTNNALCCCTTVHGHPHMPPNLLAASSARLRLPPISTILGGTFADPTFLAAAAAAAVPHYAHATTGSATDASNTSNGNSNPAAVPAGFLSGYSPLSYAYFVAKANELALANQRQSSEAAEQPSSKNNTSGANPPSSNNQEVTSAPIPAAPIVLPFQQPFYPIVCPGCAQGALPQHIPVPHNTEFAQYQPSSRDLQNHPTVDESRLSSVAPPASNTLNHANGNQAENASESSTSQSNDSQGPANTSYPVSVPLPNDAENNHTLSRNPYIPSLNFKDNMSAELSVVATLASNSAQAHPMGQQSDSNYSDHHNNDKRAHVSRRHSTSRKIAQSHTGSSSTSSAANVRYRCTECLQGFSRPSSLKIHTYSHTGERPFVCDYAGCGKAFNVRSNMRRHQRIHGL.

5 disordered regions span residues methionine 1–threonine 25, aspartate 61–asparagine 96, glutamine 235–threonine 265, glutamine 311–serine 386, and asparagine 413–serine 462. The segment covering alanine 84 to asparagine 96 has biased composition (low complexity). Composition is skewed to polar residues over residues glutamine 311–proline 321 and alanine 335–glycine 344. The segment covering asparagine 345–glutamine 362 has biased composition (low complexity). Polar residues predominate over residues asparagine 413–asparagine 427. Over residues tyrosine 428–alanine 438 the composition is skewed to basic and acidic residues. Positions serine 453–serine 462 are enriched in low complexity. C2H2-type zinc fingers lie at residues tyrosine 468–proline 495 and phenylalanine 496–leucine 522.

The protein localises to the nucleus. The polypeptide is Zinc finger protein C25B8.19c (Schizosaccharomyces pombe (strain 972 / ATCC 24843) (Fission yeast)).